Consider the following 102-residue polypeptide: uncharacterized protein (102 aa).

A run of 2 helical transmembrane segments spans residues 33-55 and 57-79; these read VLELLTIISGLVVTLVLVVLVVL and VVGVVVLVVLLVVVVLLCDVVVA.

It is found in the membrane. This is an uncharacterized protein from Saccharomyces cerevisiae (strain ATCC 204508 / S288c) (Baker's yeast).